A 432-amino-acid polypeptide reads, in one-letter code: Tryptophan--tRNA ligase, cytoplasmic (432 aa).

Residues Pro111 to His120 carry the 'HIGH' region motif. Positions Lys295 to Ser299 match the 'KMSKS' region motif.

It belongs to the class-I aminoacyl-tRNA synthetase family. As to quaternary structure, homodimer.

The protein localises to the cytoplasm. The catalysed reaction is tRNA(Trp) + L-tryptophan + ATP = L-tryptophyl-tRNA(Trp) + AMP + diphosphate + H(+). This Saccharomyces cerevisiae (strain ATCC 204508 / S288c) (Baker's yeast) protein is Tryptophan--tRNA ligase, cytoplasmic (WRS1).